We begin with the raw amino-acid sequence, 233 residues long: 7-cyano-7-deazaguanine synthase (233 aa).

Residue 11 to 21 (LSGGLDSSTVL) participates in ATP binding. Zn(2+)-binding residues include Cys-195, Cys-203, Cys-206, and Cys-209.

Belongs to the QueC family. It depends on Zn(2+) as a cofactor.

The catalysed reaction is 7-carboxy-7-deazaguanine + NH4(+) + ATP = 7-cyano-7-deazaguanine + ADP + phosphate + H2O + H(+). It participates in purine metabolism; 7-cyano-7-deazaguanine biosynthesis. Its function is as follows. Catalyzes the ATP-dependent conversion of 7-carboxy-7-deazaguanine (CDG) to 7-cyano-7-deazaguanine (preQ(0)). The sequence is that of 7-cyano-7-deazaguanine synthase from Thermosynechococcus vestitus (strain NIES-2133 / IAM M-273 / BP-1).